The following is a 284-amino-acid chain: MKLDGYTRLAAVVANPIKHSISPFIHNRAFEATATNGAYVAWEIEASDLAETVANIRRYQMFGINLSMPYKEQVIPYLDKLSDEARLIGAVNTVVNENGNLIGYNTDGKGFFKCLPSFTISGKKMTLLGAGGAAKSILAQAILDGVSQISVFVRSVSMEKTRPYLDKLQEQTGFKVDLYALENVSELQARIVESDLLVNATSVGMDGQSSPVPESINLPETILVADIIYQPFETPFLKWARSQGKPAVNGLGMLLYQAAEAFQLWTGKEMPTEEIWQSLTEKYQ.

Residues 20–22 (SIS) and Ser-67 contribute to the shikimate site. Lys-71 acts as the Proton acceptor in catalysis. Asp-83 provides a ligand contact to NADP(+). Shikimate contacts are provided by Asn-92 and Asp-107. Residues 129–133 (GAGGA) and Ile-227 each bind NADP(+). Residue Tyr-229 coordinates shikimate. Gly-250 is an NADP(+) binding site.

The protein belongs to the shikimate dehydrogenase family. As to quaternary structure, homodimer.

The enzyme catalyses shikimate + NADP(+) = 3-dehydroshikimate + NADPH + H(+). It functions in the pathway metabolic intermediate biosynthesis; chorismate biosynthesis; chorismate from D-erythrose 4-phosphate and phosphoenolpyruvate: step 4/7. Its function is as follows. Involved in the biosynthesis of the chorismate, which leads to the biosynthesis of aromatic amino acids. Catalyzes the reversible NADPH linked reduction of 3-dehydroshikimate (DHSA) to yield shikimate (SA). The polypeptide is Shikimate dehydrogenase (NADP(+)) (Streptococcus pneumoniae (strain ATCC 700669 / Spain 23F-1)).